Consider the following 79-residue polypeptide: Putative sulfur carrier protein TM_0983 (79 aa).

The active-site Cysteine persulfide intermediate is the Cys-17.

Belongs to the sulfur carrier protein TusA family.

The polypeptide is Putative sulfur carrier protein TM_0983 (Thermotoga maritima (strain ATCC 43589 / DSM 3109 / JCM 10099 / NBRC 100826 / MSB8)).